The following is a 910-amino-acid chain: Eukaryotic translation initiation factor 3 subunit C (910 aa).

Positions 1-21 (MSRFFANGSDSESESSEDEIQ) are disordered. Over residues 11–20 (SESESSEDEI) the composition is skewed to acidic residues. S34, S165, S176, and S185 each carry phosphoserine. Residues 157 to 281 (FREAPDQESE…KRAEDDEDGE (125 aa)) form a disordered region. Residues 162–186 (DQESEAEDEVVAQESDGGDAGDDSD) show a composition bias toward acidic residues. The span at 193–207 (EAAPKAVKSAPAKAA) shows a compositional bias: low complexity. Acidic residues predominate over residues 209–235 (ADDDDSDDSIDWDSDSESETESSDDEN). Residues 240-268 (MRERFLKRTTEKEEKDDDKRKDKRKEQKV) are compositionally biased toward basic and acidic residues. The region spanning 639–815 (FHMHINLELL…ETVVMHRSEP (177 aa)) is the PCI domain. Positions 847–910 (FFQRGNMGNR…QQQVQTIDEE (64 aa)) are disordered. Positions 862–874 (NRNQNNQGGNWLG) are enriched in low complexity. A compositionally biased stretch (basic residues) spans 882 to 891 (RNRNQRGHHK). Residues 895–910 (DRQQQQQQQVQTIDEE) show a composition bias toward low complexity.

Belongs to the eIF-3 subunit C family. Component of the eukaryotic translation initiation factor 3 (eIF-3) complex. The eIF-3 complex interacts with pix.

It localises to the cytoplasm. In terms of biological role, component of the eukaryotic translation initiation factor 3 (eIF-3) complex, which is involved in protein synthesis of a specialized repertoire of mRNAs and, together with other initiation factors, stimulates binding of mRNA and methionyl-tRNAi to the 40S ribosome. The eIF-3 complex specifically targets and initiates translation of a subset of mRNAs involved in cell proliferation. This is Eukaryotic translation initiation factor 3 subunit C from Drosophila yakuba (Fruit fly).